The following is a 337-amino-acid chain: Fructose-1,6-bisphosphatase class 1 (337 aa).

4 residues coordinate Mg(2+): glutamate 89, aspartate 112, leucine 114, and aspartate 115. Substrate contacts are provided by residues 115 to 118 (DGSS), asparagine 208, tyrosine 241, and lysine 271. Glutamate 277 serves as a coordination point for Mg(2+).

The protein belongs to the FBPase class 1 family. Homotetramer. It depends on Mg(2+) as a cofactor.

The protein localises to the cytoplasm. It catalyses the reaction beta-D-fructose 1,6-bisphosphate + H2O = beta-D-fructose 6-phosphate + phosphate. The protein operates within carbohydrate biosynthesis; gluconeogenesis. This is Fructose-1,6-bisphosphatase class 1 from Yersinia enterocolitica serotype O:8 / biotype 1B (strain NCTC 13174 / 8081).